The sequence spans 407 residues: Imidazolonepropionase (407 aa).

2 residues coordinate Fe(3+): H74 and H76. Zn(2+) contacts are provided by H74 and H76. R83, Y146, and H179 together coordinate 4-imidazolone-5-propanoate. Y146 serves as a coordination point for N-formimidoyl-L-glutamate. Position 244 (H244) interacts with Fe(3+). H244 is a binding site for Zn(2+). Residue Q247 coordinates 4-imidazolone-5-propanoate. D319 contributes to the Fe(3+) binding site. Position 319 (D319) interacts with Zn(2+). 2 residues coordinate N-formimidoyl-L-glutamate: N321 and G323. Residue T324 participates in 4-imidazolone-5-propanoate binding.

It belongs to the metallo-dependent hydrolases superfamily. HutI family. Zn(2+) is required as a cofactor. Fe(3+) serves as cofactor.

Its subcellular location is the cytoplasm. It carries out the reaction 4-imidazolone-5-propanoate + H2O = N-formimidoyl-L-glutamate. It participates in amino-acid degradation; L-histidine degradation into L-glutamate; N-formimidoyl-L-glutamate from L-histidine: step 3/3. Functionally, catalyzes the hydrolytic cleavage of the carbon-nitrogen bond in imidazolone-5-propanoate to yield N-formimidoyl-L-glutamate. It is the third step in the universal histidine degradation pathway. The chain is Imidazolonepropionase from Salmonella arizonae (strain ATCC BAA-731 / CDC346-86 / RSK2980).